The chain runs to 2014 residues: AP-1 accessory protein LAA1 (2014 aa).

As to quaternary structure, interacts with the clathrin-associated adapter complex AP-1. Interacts directly with LAA2.

It localises to the golgi apparatus. It is found in the cytoplasmic vesicle. Its subcellular location is the clathrin-coated vesicle. Its function is as follows. Involved in localization of clathrin adapter protein complex-1 (AP-1) and subsequent AP-1-mediated clathrin-coated vesicle cargo loading. In complex with LAA2, cooperates with the small GTPase ARF1 and the phosphatidyl-inositol-4-phosphate (PI4P) synthesis to confer temporal specificity to AP-1 recruitment. In Saccharomyces cerevisiae (strain ATCC 204508 / S288c) (Baker's yeast), this protein is AP-1 accessory protein LAA1.